The following is a 137-amino-acid chain: Putative pre-16S rRNA nuclease (137 aa).

It belongs to the YqgF nuclease family.

Its subcellular location is the cytoplasm. Functionally, could be a nuclease involved in processing of the 5'-end of pre-16S rRNA. The chain is Putative pre-16S rRNA nuclease from Mycoplasmopsis synoviae (strain 53) (Mycoplasma synoviae).